We begin with the raw amino-acid sequence, 298 residues long: Proline-rich protein 32 (298 aa).

The segment at 36–56 (CLSSKPEDDAEPWGQPQVPLR) is disordered.

This Homo sapiens (Human) protein is Proline-rich protein 32 (PRR32).